We begin with the raw amino-acid sequence, 194 residues long: MKNIILASASERRQELLKRILEDFQIIVSDFDESSIPFKDNIPSYVMNLAEGKARSVGKKIMDQDSNLVIGCDTLVAFNNKVLGKPKDKKDAFEMLQALSGNEHEVYSGLAILDVKSNKIITDFVCTKVKFSKLTSLQIEKYINTGDPMDKAGAYGIQGKAGVFVENINGCYYNVVGLPLNKLNSMLMEMGVNL.

Residue D73 is the Proton acceptor of the active site.

The protein belongs to the Maf family. YhdE subfamily. Requires a divalent metal cation as cofactor.

Its subcellular location is the cytoplasm. It carries out the reaction dTTP + H2O = dTMP + diphosphate + H(+). The enzyme catalyses UTP + H2O = UMP + diphosphate + H(+). Nucleoside triphosphate pyrophosphatase that hydrolyzes dTTP and UTP. May have a dual role in cell division arrest and in preventing the incorporation of modified nucleotides into cellular nucleic acids. The sequence is that of dTTP/UTP pyrophosphatase from Clostridium botulinum (strain Loch Maree / Type A3).